Reading from the N-terminus, the 312-residue chain is Bifunctional pinoresinol-lariciresinol reductase 2 (312 aa).

Residues 11–17, Arg36, and Lys45 contribute to the NADP(+) site; that span reads GGTGYIG. The Proton acceptor role is filled by Lys138. Arg142 is an NADP(+) binding site. A substrate-binding site is contributed by His270.

The protein belongs to the NmrA-type oxidoreductase family. Isoflavone reductase subfamily. Dimer.

The catalysed reaction is (+)-lariciresinol + NADP(+) = (+)-pinoresinol + NADPH + H(+). The enzyme catalyses (-)-secoisolariciresinol + NADP(+) = (+)-lariciresinol + NADPH + H(+). It catalyses the reaction (-)-lariciresinol + NADP(+) = (-)-pinoresinol + NADPH + H(+). Its function is as follows. Reductase involved in lignan biosynthesis. Catalyzes the enantioselective sequential conversion of (+)-pinoresinol into (+)-lariciresinol and of (+)-lariciresinol into (-)-secoisolariciresinol. Can also convert with a lower efficiency (-)-pinoresinol into (-)-lariciresinol, but not (-)-lariciresinol into (+)-secoisolariciresinol. Abstracts the 4R-hydride from the NADPH cofactor during catalysis. The chain is Bifunctional pinoresinol-lariciresinol reductase 2 (PLR_Tp2) from Thuja plicata (Western red-cedar).